A 104-amino-acid polypeptide reads, in one-letter code: Large ribosomal subunit protein uL24 (104 aa).

This sequence belongs to the universal ribosomal protein uL24 family. In terms of assembly, part of the 50S ribosomal subunit.

One of two assembly initiator proteins, it binds directly to the 5'-end of the 23S rRNA, where it nucleates assembly of the 50S subunit. Its function is as follows. One of the proteins that surrounds the polypeptide exit tunnel on the outside of the subunit. This is Large ribosomal subunit protein uL24 from Dichelobacter nodosus (strain VCS1703A).